The sequence spans 557 residues: Hydroxylamine reductase (557 aa).

The [4Fe-4S] cluster site is built by cysteine 3, cysteine 6, cysteine 19, and cysteine 26. Hybrid [4Fe-2O-2S] cluster is bound by residues histidine 253, glutamate 277, cysteine 321, cysteine 408, cysteine 436, cysteine 461, glutamate 495, and lysine 497. At cysteine 408 the chain carries Cysteine persulfide.

This sequence belongs to the HCP family. It depends on [4Fe-4S] cluster as a cofactor. Hybrid [4Fe-2O-2S] cluster is required as a cofactor.

The protein localises to the cytoplasm. The catalysed reaction is A + NH4(+) + H2O = hydroxylamine + AH2 + H(+). Catalyzes the reduction of hydroxylamine to form NH(3) and H(2)O. This Acidiphilium cryptum (strain JF-5) protein is Hydroxylamine reductase.